The primary structure comprises 203 residues: SOSS complex subunit B1 (203 aa).

Positions 22–92 (IVLETGRVTK…TLYTGRGGDL (71 aa)) form a DNA-binding region, OB. The segment at 111-203 (PNPEYIAQQS…GKEPRRTGKR (93 aa)) is disordered. Residues 117 to 128 (AQQSQNKQAQAE) are compositionally biased toward polar residues. Positions 129-140 (SGTGTNSHNSSS) are enriched in low complexity. Residues 149–182 (ENGNGSNSSGPPTHQSTAPTHSTSGRITRSQPNH) are compositionally biased toward polar residues.

Belongs to the SOSS-B family. SOSS-B1 subfamily. As to quaternary structure, component of the SOSS complex, composed of soss-b (soss-b1/nabp2 or soss-b2/nabp1), soss-a/ints3 and soss-c/inip. SOSS complexes containing soss-b1/nabp2 are more abundant than complexes containing soss-b2/nabp1.

The protein resides in the nucleus. Functionally, component of the SOSS complex, a multiprotein complex that functions downstream of the MRN complex to promote DNA repair and G2/M checkpoint. In the SOSS complex, acts as a sensor of single-stranded DNA that binds to single-stranded DNA. The SOSS complex associates with DNA lesions and influences diverse endpoints in the cellular DNA damage response including cell-cycle checkpoint activation, recombinational repair and maintenance of genomic stability. Required for efficient homologous recombination-dependent repair of double-strand breaks (DSBs). The chain is SOSS complex subunit B1 (nabp2) from Xenopus tropicalis (Western clawed frog).